We begin with the raw amino-acid sequence, 329 residues long: Zygote arrest protein 1 (329 aa).

Disordered regions lie at residues 106 to 132 (LRRR…RTQA) and 146 to 218 (FREE…DDLK). Acidic residues predominate over residues 149-162 (EGEEEEDTDLEVTE). Positions 166–177 (SAEKLESAEKNV) are enriched in basic and acidic residues. Residues 231–314 (KYGFYHCKDC…RQDLCGRCKG (84 aa)) form a 3CxxC-type zinc finger.

It belongs to the ZAR1 family. As to expression, specifically expressed in ovaries but absent in testes.

Its subcellular location is the cytoplasm. The protein localises to the cytoplasmic ribonucleoprotein granule. MRNA-binding protein required for maternal mRNA storage, translation and degradation during oocyte maturation. Probably promotes formation of some phase-separated membraneless compartment that stores maternal mRNAs in oocytes: acts by undergoing liquid-liquid phase separation upon binding to maternal mRNAs. Binds to the 3'-UTR of zona pellucida mRNAs, inhibiting their translation. This is Zygote arrest protein 1 from Danio rerio (Zebrafish).